The chain runs to 285 residues: 4-diphosphocytidyl-2-C-methyl-D-erythritol kinase (285 aa).

Lys-11 is an active-site residue. 93-103 contributes to the ATP binding site; it reads PLAAGLAGGSA. Asp-135 is an active-site residue.

It belongs to the GHMP kinase family. IspE subfamily.

It carries out the reaction 4-CDP-2-C-methyl-D-erythritol + ATP = 4-CDP-2-C-methyl-D-erythritol 2-phosphate + ADP + H(+). It participates in isoprenoid biosynthesis; isopentenyl diphosphate biosynthesis via DXP pathway; isopentenyl diphosphate from 1-deoxy-D-xylulose 5-phosphate: step 3/6. Its function is as follows. Catalyzes the phosphorylation of the position 2 hydroxy group of 4-diphosphocytidyl-2C-methyl-D-erythritol. The chain is 4-diphosphocytidyl-2-C-methyl-D-erythritol kinase from Moorella thermoacetica (strain ATCC 39073 / JCM 9320).